The following is a 668-amino-acid chain: Tyrosine-protein phosphatase non-receptor type ptp-2 (668 aa).

2 consecutive SH2 domains span residues 10-113 and 134-232; these read NFYY…KKPV and WWHG…EEPL. Residues 264–580 enclose the Tyrosine-protein phosphatase domain; it reads ISEEFDRLSQ…QFLYKALAFY (317 aa). Catalysis depends on Cys518, which acts as the Phosphocysteine intermediate. The tract at residues 603–668 is disordered; that stretch reads PRRLRPTPNA…SSTLLKSTKK (66 aa). Composition is skewed to low complexity over residues 616 to 634 and 652 to 668; these read SSARQVTSSRPSSSASSRT and STSSTSSSSTLLKSTKK.

It belongs to the protein-tyrosine phosphatase family. Non-receptor class 2 subfamily. In terms of tissue distribution, expressed in embryonic cells, developing vulva, body wall muscles, head neurons and gonadal sheath cells.

Its subcellular location is the cytoplasm. It carries out the reaction O-phospho-L-tyrosyl-[protein] + H2O = L-tyrosyl-[protein] + phosphate. Involved in embryonic and larval development. Plays a role in oogenesis by regulating mpk-1 phosphorylation and oocyte maturation in response to major sperm protein (MSP). During the formation of neuromuscular junctions at the larval stage, negatively regulates membrane protrusion from body wall muscles probably downstream of receptor egl-15. Plays a role in fluid homeostasis probably downstream of receptor egl-15 and adapter soc-1. Promotes vulva induction and negatively regulates fertility probably downstream of receptor let-23. Negatively regulates daf-2-mediated repression of dauer formation. The protein is Tyrosine-protein phosphatase non-receptor type ptp-2 of Caenorhabditis elegans.